A 396-amino-acid chain; its full sequence is Elongation factor Tu (396 aa).

The 197-residue stretch at 10–206 (KPHVNIGTIG…AVDESVPDPI (197 aa)) folds into the tr-type G domain. The segment at 19-26 (GHVDHGKT) is G1. A GTP-binding site is contributed by 19–26 (GHVDHGKT). Threonine 26 contributes to the Mg(2+) binding site. Residues 62–66 (GITIN) are G2. The tract at residues 83–86 (DAPG) is G3. GTP-binding positions include 83-87 (DAPGH) and 138-141 (NKSD). Residues 138–141 (NKSD) are G4. Residues 176 to 178 (SGL) are G5.

This sequence belongs to the TRAFAC class translation factor GTPase superfamily. Classic translation factor GTPase family. EF-Tu/EF-1A subfamily. In terms of assembly, monomer.

It localises to the cytoplasm. The catalysed reaction is GTP + H2O = GDP + phosphate + H(+). Its function is as follows. GTP hydrolase that promotes the GTP-dependent binding of aminoacyl-tRNA to the A-site of ribosomes during protein biosynthesis. This is Elongation factor Tu from Renibacterium salmoninarum (strain ATCC 33209 / DSM 20767 / JCM 11484 / NBRC 15589 / NCIMB 2235).